Consider the following 180-residue polypeptide: Large ribosomal subunit protein uL5 (180 aa).

Belongs to the universal ribosomal protein uL5 family. Part of the 50S ribosomal subunit; part of the 5S rRNA/L5/L18/L25 subcomplex. Contacts the 5S rRNA and the P site tRNA. Forms a bridge to the 30S subunit in the 70S ribosome.

Functionally, this is one of the proteins that bind and probably mediate the attachment of the 5S RNA into the large ribosomal subunit, where it forms part of the central protuberance. In the 70S ribosome it contacts protein S13 of the 30S subunit (bridge B1b), connecting the 2 subunits; this bridge is implicated in subunit movement. Contacts the P site tRNA; the 5S rRNA and some of its associated proteins might help stabilize positioning of ribosome-bound tRNAs. The sequence is that of Large ribosomal subunit protein uL5 from Heliobacterium modesticaldum (strain ATCC 51547 / Ice1).